The chain runs to 202 residues: Thymidylate kinase (202 aa).

An ATP-binding site is contributed by 7–14 (GIDGSGKT).

This sequence belongs to the thymidylate kinase family.

The catalysed reaction is dTMP + ATP = dTDP + ADP. Its function is as follows. Phosphorylation of dTMP to form dTDP in both de novo and salvage pathways of dTTP synthesis. This chain is Thymidylate kinase, found in Ehrlichia chaffeensis (strain ATCC CRL-10679 / Arkansas).